The primary structure comprises 475 residues: Aspartyl/glutamyl-tRNA(Asn/Gln) amidotransferase subunit B (475 aa).

The protein belongs to the GatB/GatE family. GatB subfamily. Heterotrimer of A, B and C subunits.

The catalysed reaction is L-glutamyl-tRNA(Gln) + L-glutamine + ATP + H2O = L-glutaminyl-tRNA(Gln) + L-glutamate + ADP + phosphate + H(+). The enzyme catalyses L-aspartyl-tRNA(Asn) + L-glutamine + ATP + H2O = L-asparaginyl-tRNA(Asn) + L-glutamate + ADP + phosphate + 2 H(+). In terms of biological role, allows the formation of correctly charged Asn-tRNA(Asn) or Gln-tRNA(Gln) through the transamidation of misacylated Asp-tRNA(Asn) or Glu-tRNA(Gln) in organisms which lack either or both of asparaginyl-tRNA or glutaminyl-tRNA synthetases. The reaction takes place in the presence of glutamine and ATP through an activated phospho-Asp-tRNA(Asn) or phospho-Glu-tRNA(Gln). The chain is Aspartyl/glutamyl-tRNA(Asn/Gln) amidotransferase subunit B from Chlorobium luteolum (strain DSM 273 / BCRC 81028 / 2530) (Pelodictyon luteolum).